We begin with the raw amino-acid sequence, 396 residues long: Proteinase-activated receptor 4 (396 aa).

Residues Met1–Ser16 form the signal peptide. A propeptide spans Leu17–Arg59 (removed for receptor activation). The segment at Asp28–Pro62 is disordered. Positions Glu46–Asn57 are enriched in basic and acidic residues. The Extracellular portion of the chain corresponds to Gly60–Ala94. The N-linked (GlcNAc...) asparagine glycan is linked to Asn68. Residues Leu95 to Ala115 form a helical membrane-spanning segment. The Cytoplasmic segment spans residues Thr116–Arg120. Residues Leu121–Leu141 traverse the membrane as a helical segment. The Extracellular segment spans residues Pro142–Arg162. Residues Cys161 and Cys240 are joined by a disulfide bond. Residues Val163 to Ser183 traverse the membrane as a helical segment. Topologically, residues Leu184–Arg203 are cytoplasmic. Residues Leu204–Thr224 form a helical membrane-spanning segment. Over Leu225 to Pro255 the chain is Extracellular. Residues Ala256–Tyr276 form a helical membrane-spanning segment. The Cytoplasmic segment spans residues Gly277–Arg295. The helical transmembrane segment at Leu296–Val316 threads the bilayer. Over Leu317–Tyr331 the chain is Extracellular. The chain crosses the membrane as a helical span at residues Gly332–Val355. Residues Ser356 to Leu396 lie on the Cytoplasmic side of the membrane.

The protein belongs to the G-protein coupled receptor 1 family. Post-translationally, a proteolytic cleavage generates a new N-terminus that functions as a tethered ligand. As to expression, highly expressed in the spleen. Slight expression in the heart, lung, skeletal muscle and kidney. No detectable expression in brain, liver or testis. Also detected in platelets.

It is found in the cell membrane. Functionally, receptor for activated thrombin or trypsin coupled to G proteins that stimulate phosphoinositide hydrolysis. May play a role in platelets activation. The protein is Proteinase-activated receptor 4 (F2rl3) of Mus musculus (Mouse).